A 508-amino-acid polypeptide reads, in one-letter code: Bifunctional purine biosynthesis protein PurH (508 aa).

One can recognise an MGS-like domain in the interval 1–144 (MTRALLSVSD…KNFAGVLPIV (144 aa)).

The protein belongs to the PurH family.

The catalysed reaction is (6R)-10-formyltetrahydrofolate + 5-amino-1-(5-phospho-beta-D-ribosyl)imidazole-4-carboxamide = 5-formamido-1-(5-phospho-D-ribosyl)imidazole-4-carboxamide + (6S)-5,6,7,8-tetrahydrofolate. The enzyme catalyses IMP + H2O = 5-formamido-1-(5-phospho-D-ribosyl)imidazole-4-carboxamide. It participates in purine metabolism; IMP biosynthesis via de novo pathway; 5-formamido-1-(5-phospho-D-ribosyl)imidazole-4-carboxamide from 5-amino-1-(5-phospho-D-ribosyl)imidazole-4-carboxamide (10-formyl THF route): step 1/1. It functions in the pathway purine metabolism; IMP biosynthesis via de novo pathway; IMP from 5-formamido-1-(5-phospho-D-ribosyl)imidazole-4-carboxamide: step 1/1. This chain is Bifunctional purine biosynthesis protein PurH, found in Leuconostoc citreum (strain KM20).